We begin with the raw amino-acid sequence, 470 residues long: Homogentisate 1,2-dioxygenase (470 aa).

Fe cation-binding residues include histidine 356, glutamate 362, and histidine 392.

It belongs to the homogentisate dioxygenase family. It depends on Fe cation as a cofactor.

The enzyme catalyses homogentisate + O2 = 4-maleylacetoacetate + H(+). It functions in the pathway amino-acid degradation; L-phenylalanine degradation; acetoacetate and fumarate from L-phenylalanine: step 4/6. This chain is Homogentisate 1,2-dioxygenase (HGO), found in Oryza sativa subsp. japonica (Rice).